The primary structure comprises 547 residues: ATP synthase subunit beta, mitochondrial (547 aa).

A mitochondrion-targeting transit peptide spans 1–45 (MASRRLLSSFLRSSTRRSLRPSFSNPRPSFLTSYCSSPASILRRY). Residues 52–62 (KEPAASKPAGT) are compositionally biased toward low complexity. Positions 52-74 (KEPAASKPAGTAGTGKGTITDEK) are disordered. ATP is bound at residue 226–233 (GGDWVGKT).

This sequence belongs to the ATPase alpha/beta chains family. F-type ATPases have 2 components, CF(1) - the catalytic core - and CF(0) - the membrane proton channel. CF(1) has five subunits: alpha(3), beta(3), gamma(1), delta(1), epsilon(1). CF(0) has three main subunits: a, b and c.

The protein localises to the mitochondrion. Its subcellular location is the mitochondrion inner membrane. The catalysed reaction is ATP + H2O + 4 H(+)(in) = ADP + phosphate + 5 H(+)(out). Functionally, mitochondrial membrane ATP synthase (F(1)F(0) ATP synthase or Complex V) produces ATP from ADP in the presence of a proton gradient across the membrane which is generated by electron transport complexes of the respiratory chain. F-type ATPases consist of two structural domains, F(1) - containing the extramembraneous catalytic core, and F(0) - containing the membrane proton channel, linked together by a central stalk and a peripheral stalk. During catalysis, ATP synthesis in the catalytic domain of F(1) is coupled via a rotary mechanism of the central stalk subunits to proton translocation. Subunits alpha and beta form the catalytic core in F(1). Rotation of the central stalk against the surrounding alpha(3)beta(3) subunits leads to hydrolysis of ATP in three separate catalytic sites on the beta subunits. In Daucus carota (Wild carrot), this protein is ATP synthase subunit beta, mitochondrial (ATPB).